The sequence spans 306 residues: Agmatinase (306 aa).

Mn(2+) is bound by residues His-126, Asp-149, His-151, Asp-153, Asp-230, and Asp-232.

Belongs to the arginase family. Agmatinase subfamily. Mn(2+) is required as a cofactor.

The enzyme catalyses agmatine + H2O = urea + putrescine. It functions in the pathway amine and polyamine biosynthesis; putrescine biosynthesis via agmatine pathway; putrescine from agmatine: step 1/1. Catalyzes the formation of putrescine from agmatine. This Klebsiella pneumoniae (strain 342) protein is Agmatinase.